Consider the following 251-residue polypeptide: Ubiquinone/menaquinone biosynthesis C-methyltransferase UbiE (251 aa).

S-adenosyl-L-methionine is bound by residues Thr74, Asp95, and 123-124; that span reads DA.

It belongs to the class I-like SAM-binding methyltransferase superfamily. MenG/UbiE family.

It carries out the reaction a 2-demethylmenaquinol + S-adenosyl-L-methionine = a menaquinol + S-adenosyl-L-homocysteine + H(+). The catalysed reaction is a 2-methoxy-6-(all-trans-polyprenyl)benzene-1,4-diol + S-adenosyl-L-methionine = a 5-methoxy-2-methyl-3-(all-trans-polyprenyl)benzene-1,4-diol + S-adenosyl-L-homocysteine + H(+). It functions in the pathway quinol/quinone metabolism; menaquinone biosynthesis; menaquinol from 1,4-dihydroxy-2-naphthoate: step 2/2. The protein operates within cofactor biosynthesis; ubiquinone biosynthesis. In terms of biological role, methyltransferase required for the conversion of demethylmenaquinol (DMKH2) to menaquinol (MKH2) and the conversion of 2-polyprenyl-6-methoxy-1,4-benzoquinol (DDMQH2) to 2-polyprenyl-3-methyl-6-methoxy-1,4-benzoquinol (DMQH2). The chain is Ubiquinone/menaquinone biosynthesis C-methyltransferase UbiE from Idiomarina loihiensis (strain ATCC BAA-735 / DSM 15497 / L2-TR).